Reading from the N-terminus, the 425-residue chain is Oxalate decarboxylase ARB_02208 (425 aa).

Positions Met1 to Ala19 are cleaved as a signal peptide. A Cupin type-1 1 domain is found at Phe73–Asp236. Residues His116, His118, Glu122, and His161 each coordinate Mn(2+). N-linked (GlcNAc...) asparagine glycans are attached at residues Asn228, Asn247, Asn254, and Asn265. A Cupin type-1 2 domain is found at Phe270–Asp414. Positions 317, 319, 324, and 363 each coordinate Mn(2+). Asn367 carries N-linked (GlcNAc...) asparagine glycosylation. The Proton donor role is filled by Glu378.

Mn(2+) serves as cofactor.

Its subcellular location is the secreted. It catalyses the reaction oxalate + H(+) = formate + CO2. Its function is as follows. Converts oxalate to formate and CO(2) in an O(2)-dependent reaction. Can also catalyze minor side reactions: oxalate oxidation to produce H(2)O(2), and oxalate-dependent, H(2)O(2)-independent dye oxidations. The polypeptide is Oxalate decarboxylase ARB_02208 (Arthroderma benhamiae (strain ATCC MYA-4681 / CBS 112371) (Trichophyton mentagrophytes)).